The primary structure comprises 310 residues: ADP-L-glycero-D-manno-heptose-6-epimerase (310 aa).

NADP(+)-binding positions include 10-11, 31-32, K38, K53, 75-79, and N92; these read FI, DN, and EGACS. Y140 (proton acceptor) is an active-site residue. Residue K144 participates in NADP(+) binding. Substrate is bound at residue N169. NADP(+)-binding residues include V170 and K178. K178 serves as the catalytic Proton acceptor. Substrate is bound by residues S180, H187, 201-204, R209, and Y272; that span reads FEGS.

Belongs to the NAD(P)-dependent epimerase/dehydratase family. HldD subfamily. Homopentamer. It depends on NADP(+) as a cofactor.

The catalysed reaction is ADP-D-glycero-beta-D-manno-heptose = ADP-L-glycero-beta-D-manno-heptose. It functions in the pathway nucleotide-sugar biosynthesis; ADP-L-glycero-beta-D-manno-heptose biosynthesis; ADP-L-glycero-beta-D-manno-heptose from D-glycero-beta-D-manno-heptose 7-phosphate: step 4/4. Its function is as follows. Catalyzes the interconversion between ADP-D-glycero-beta-D-manno-heptose and ADP-L-glycero-beta-D-manno-heptose via an epimerization at carbon 6 of the heptose. This Salmonella dublin (strain CT_02021853) protein is ADP-L-glycero-D-manno-heptose-6-epimerase.